Consider the following 2515-residue polypeptide: Zinc finger FYVE domain-containing protein 26 (2515 aa).

Disordered stretches follow at residues 520 to 540 (GPSD…SSPG), 586 to 634 (PHLP…EPHG), 672 to 696 (SSRG…DGLQ), and 718 to 800 (SIQG…SSLI). Residues 623-634 (PEPKDSSPEPHG) are compositionally biased toward basic and acidic residues. A compositionally biased stretch (basic residues) spans 738–748 (PSLRRGRRTRK). Basic and acidic residues predominate over residues 749–758 (SRADDQDKGS). Over residues 759-783 (RSSLENTSSELSTSTSEGSLSAASG) the composition is skewed to low complexity. Serine 774 carries the post-translational modification Phosphoserine. The stretch at 842–869 (MFMERYQEVIQELAQVEHKIENQNSDGG) forms a coiled coil. The tract at residues 1253–1273 (TENPTLERKPPSSPRDSSPPA) is disordered. A phosphoserine mark is found at serine 1718, serine 1740, serine 1756, and serine 1758. The disordered stretch occupies residues 1740 to 1760 (SAEFSSATAPGVSTVHSPSVR). The segment at 1788–1848 (DESESVCMVC…VCDQCYSYFN (61 aa)) adopts an FYVE-type zinc-finger fold. Residues cysteine 1794, cysteine 1797, cysteine 1811, cysteine 1814, cysteine 1819, cysteine 1822, cysteine 1840, and cysteine 1843 each coordinate Zn(2+).

It belongs to the ZFYVE26 family. As to quaternary structure, interacts with AP5Z1, AP5B1, AP5S1 and SPG11. Interacts with TTC19 and KIF13A.

The protein resides in the cytoplasm. The protein localises to the cytoskeleton. It localises to the microtubule organizing center. It is found in the centrosome. Its subcellular location is the midbody. Its function is as follows. Phosphatidylinositol 3-phosphate-binding protein required for the abscission step in cytokinesis: recruited to the midbody during cytokinesis and acts as a regulator of abscission. May also be required for efficient homologous recombination DNA double-strand break repair. In Bos taurus (Bovine), this protein is Zinc finger FYVE domain-containing protein 26 (ZFYVE26).